Reading from the N-terminus, the 287-residue chain is Nucleotide-binding protein Asuc_0930 (287 aa).

8-15 (GRSGAGKS) serves as a coordination point for ATP. A GTP-binding site is contributed by 56 to 59 (DIRN).

Belongs to the RapZ-like family.

Its function is as follows. Displays ATPase and GTPase activities. The chain is Nucleotide-binding protein Asuc_0930 from Actinobacillus succinogenes (strain ATCC 55618 / DSM 22257 / CCUG 43843 / 130Z).